The following is a 118-amino-acid chain: SPbeta prophage-derived uncharacterized protein YolB (118 aa).

This Bacillus subtilis (strain 168) protein is SPbeta prophage-derived uncharacterized protein YolB (yolB).